The primary structure comprises 279 residues: Prepilin leader peptidase/N-methyltransferase (279 aa).

The Periplasmic segment spans residues 1–16; the sequence is MDDLREFAQLFPAWWF. Residues 17–35 form a helical membrane-spanning segment; that stretch reads GALGVLGLIVGSFLNVVIY. Topologically, residues 36-104 are cytoplasmic; sequence RLPIMLERRW…RSRCCHQSVS (69 aa). Residues 105-123 form a helical membrane-spanning segment; it reads VQYPLVEVITMLAFLAAGL. The Periplasmic portion of the chain corresponds to 124–130; it reads LWLPGMA. A helical membrane pass occupies residues 131–149; the sequence is LWGALILLSFLLVLTVIDI. At 150 to 163 the chain is on the cytoplasmic side; that stretch reads KTLLLPDELTLSLL. A helical transmembrane segment spans residues 164–182; sequence WMGLLFNLSGTFVSLNDAV. Topologically, residues 183–185 are periplasmic; the sequence is VGA. The helical transmembrane segment at 186–204 threads the bilayer; the sequence is MAGYLSLWLLYWAFKYATG. Over 205–214 the chain is Cytoplasmic; it reads KEALGYGDFK. A helical transmembrane segment spans residues 215–233; sequence LLAALGAWLGWQALPNLVL. Residues 234 to 236 lie on the Periplasmic side of the membrane; it reads VAA. The chain crosses the membrane as a helical span at residues 237 to 254; that stretch reads LSGLVVTLIWRGLRKEDT. Over 255–257 the chain is Cytoplasmic; it reads AKP. A helical membrane pass occupies residues 258–276; sequence LAFGPWLAIGGVFGMIMNG. Over 277-279 the chain is Periplasmic; that stretch reads FNL.

Belongs to the peptidase A24 family.

The protein localises to the cell inner membrane. It catalyses the reaction Typically cleaves a -Gly-|-Phe- bond to release an N-terminal, basic peptide of 5-8 residues from type IV prepilin, and then N-methylates the new N-terminal amino group, the methyl donor being S-adenosyl-L-methionine.. Functionally, plays a role in type II pseudopili formation by proteolytically removing the leader sequence from substrate proteins and subsequently monomethylating the alpha-amino group of the newly exposed N-terminal phenylalanine. Substrates include proteins required for biogenesis of the type II general secretory apparatus. The polypeptide is Prepilin leader peptidase/N-methyltransferase (outO) (Pectobacterium carotovorum subsp. carotovorum (Erwinia carotovora subsp. carotovora)).